A 225-amino-acid chain; its full sequence is Phosphoglycolate phosphatase (225 aa).

Residue Asp-11 is the Nucleophile of the active site. Mg(2+) is bound by residues Asp-11, Asp-13, and Asp-174.

The protein belongs to the HAD-like hydrolase superfamily. CbbY/CbbZ/Gph/YieH family. Mg(2+) serves as cofactor.

The enzyme catalyses 2-phosphoglycolate + H2O = glycolate + phosphate. It participates in organic acid metabolism; glycolate biosynthesis; glycolate from 2-phosphoglycolate: step 1/1. Specifically catalyzes the dephosphorylation of 2-phosphoglycolate. Is involved in the dissimilation of the intracellular 2-phosphoglycolate formed during the DNA repair of 3'-phosphoglycolate ends, a major class of DNA lesions induced by oxidative stress. The polypeptide is Phosphoglycolate phosphatase (Nitrosococcus oceani (strain ATCC 19707 / BCRC 17464 / JCM 30415 / NCIMB 11848 / C-107)).